We begin with the raw amino-acid sequence, 634 residues long: MSTSSHSGDCAAITSNSNSTIILSAIGVVFGDIGTSPLYTLKEAFSPNYGLAPNHDTVLGILSLIFWAMMLVVTIKYVTVIMRVDNDGEGGIMALTALTQRTMPFGSRSIYIVGILGIFGTSLFFGDGIITPAISVLSAVEGLEVAEPHMKAFVVPITLAVLILLFLCQRFGTERVGKTFGPITFLWFIAIGVVGVYNIIQAPEVLYAINPWWGLHFFLEHGWHSMFVLGAVVLAVTGGEALYADMGHFGAKAIRHAWMYVVLPMLALNYLGQGALVLSNPTAIGNPFYQSIPDWGLYPMIALATAAAVIASQALITGSYSLSSQAMQLGYIPRMNVRHTSQSTIGQIYVPTVNWTLLMLVILTVIGFGDSTSMASAYGVAVTGTMMITTVLMIIYARANPRVPRLMLLMIAIVFIAVDGAFFYANIIKFMDGAWFPLLLGVVIFTFMRTWLRGRKLLHEEMRKDGINLDNFLPGLMLAPPVKVPGTAVFLTADSTVVPHALMHNLKHNKVLHERNVFLTVKTLKIPYAANSERLKIEPISNGFYRVHIRFGFMETPDVPSALMCSKDHAGIDFDPMHTTFFVSRETVIPSANRGMPIWRDKLFVLMHRNAAPANAFFRIPGNRLVELGTQVEI.

12 helical membrane passes run 21-41, 58-78, 110-130, 148-168, 180-200, 217-237, 258-278, 296-316, 348-368, 377-397, 408-428, and 432-452; these read IILSAIGVVFGDIGTSPLYTL, VLGILSLIFWAMMLVVTIKYV, IYIVGILGIFGTSLFFGDGII, PHMKAFVVPITLAVLILLFLC, FGPITFLWFIAIGVVGVYNII, FFLEHGWHSMFVLGAVVLAVT, WMYVVLPMLALNYLGQGALVL, GLYPMIALATAAAVIASQALI, IYVPTVNWTLLMLVILTVIGF, AYGVAVTGTMMITTVLMIIYA, LLMIAIVFIAVDGAFFYANII, and DGAWFPLLLGVVIFTFMRTWL.

It belongs to the HAK/KUP transporter (TC 2.A.72) family.

It is found in the cell inner membrane. The catalysed reaction is K(+)(in) + H(+)(in) = K(+)(out) + H(+)(out). Functionally, transport of potassium into the cell. Likely operates as a K(+):H(+) symporter. This Xylella fastidiosa (strain Temecula1 / ATCC 700964) protein is Probable potassium transport system protein Kup.